A 170-amino-acid chain; its full sequence is MSSNECFKCGRSGHWARECPTGGGRGRGMRSRGRGFQFVSSSLPDICYRCGESGHLAKDCDLQEDACYNCGRGGHIAKDCKEPKREREQCCYNCGKPGHLARDCDHADEQKCYSCGEFGHIQKDCTKVKCYRCGETGHVAINCSKTSEVNCYRCGESGHLARECTIEATA.

Position 2 is an N-acetylserine (serine 2). The segment at 4 to 21 adopts a CCHC-type 1 zinc-finger fold; the sequence is NECFKCGRSGHWARECPT. Lysine 8 bears the N6-acetyllysine mark. Omega-N-methylarginine; by PRMT1 is present on residues arginine 25 and arginine 27. The tract at residues 25–33 is RNA-binding Arg/Gly-rich region (RGG-box); it reads RGRGMRSRG. The residue at position 42 (serine 42) is a Phosphoserine. 6 consecutive CCHC-type zinc fingers follow at residues 45–62, 65–82, 89–106, 110–127, 128–145, and 149–166; these read DICYRCGESGHLAKDCDL, DACYNCGRGGHIAKDCKE, QCCYNCGKPGHLARDCDH, QKCYSCGEFGHIQKDCTK, VKCYRCGETGHVAINCSK, and VNCYRCGESGHLARECTI. Arginine 72 carries the post-translational modification Omega-N-methylarginine.

In terms of assembly, associates with the 40S ribosomal subunit, the 80S ribosome and with polysomes. In terms of processing, arginine methylation by PRMT1 in the Arg/Gly-rich region impedes RNA binding.

The protein localises to the nucleus. The protein resides in the cytoplasm. It is found in the endoplasmic reticulum. Functionally, single-stranded DNA-binding protein that preferentially binds to the sterol regulatory element (SRE) sequence 5'-GTGCGGTG-3', and thereby mediates transcriptional repression. Has a role as transactivator of the Myc promoter. Binds single-stranded RNA in a sequence-specific manner. Binds G-rich elements in target mRNA coding sequences. Prevents G-quadruplex structure formation in vitro, suggesting a role in supporting translation by resolving stable structures on mRNAs. This Bos taurus (Bovine) protein is CCHC-type zinc finger nucleic acid binding protein (CNBP).